The primary structure comprises 566 residues: Alpha-amylase (566 aa).

Residues 1–28 form the signal peptide; that stretch reads MARRLATASLAVLAAAATALTAPTPAAA. Ca(2+) is bound by residues Asn-120, Gln-166, and Asp-175. The Nucleophile role is filled by Asp-205. Residue His-209 coordinates Ca(2+). Residue Glu-232 is the Proton donor of the active site. The 102-residue stretch at 465–566 folds into the CBM20 domain; it reads GPGTGQTSAS…ALTLNDTWRG (102 aa).

The protein belongs to the glycosyl hydrolase 13 family. In terms of assembly, monomer. It depends on Ca(2+) as a cofactor.

It carries out the reaction Endohydrolysis of (1-&gt;4)-alpha-D-glucosidic linkages in polysaccharides containing three or more (1-&gt;4)-alpha-linked D-glucose units.. The chain is Alpha-amylase (amy) from Streptomyces griseus.